A 190-amino-acid polypeptide reads, in one-letter code: Large ribosomal subunit protein bL25 (190 aa).

The segment at 1–20 (MSEQKTLSVQKRDNLGKGAN) is disordered.

The protein belongs to the bacterial ribosomal protein bL25 family. CTC subfamily. Part of the 50S ribosomal subunit; part of the 5S rRNA/L5/L18/L25 subcomplex. Contacts the 5S rRNA. Binds to the 5S rRNA independently of L5 and L18.

Its function is as follows. This is one of the proteins that binds to the 5S RNA in the ribosome where it forms part of the central protuberance. The protein is Large ribosomal subunit protein bL25 of Nitratidesulfovibrio vulgaris (strain ATCC 29579 / DSM 644 / CCUG 34227 / NCIMB 8303 / VKM B-1760 / Hildenborough) (Desulfovibrio vulgaris).